The sequence spans 590 residues: Tape measure protein (590 aa).

Disordered regions lie at residues 1–35 (MKKP…LSGL), 147–185 (ESVG…EEKQ), and 515–535 (LKKN…EAKQ). The segment covering 176–185 (PKQESPEEKQ) has biased composition (basic and acidic residues).

The protein localises to the virion. In terms of biological role, serves as a base for tail tube protein polymerization and acts as a template for tail length determination. In Escherichia coli (Bacteriophage T4), this protein is Tape measure protein (29).